Here is a 215-residue protein sequence, read N- to C-terminus: Adenylate kinase (215 aa).

ATP is bound at residue 10–15 (GAGKGT). Residues 30–59 (STGDMLRAAVKAGTELGLKAKSVMDSGGLV) are NMP. AMP-binding positions include T31, R36, 57–59 (GLV), 85–88 (GFPR), and Q92. The interval 122-159 (GRRVHEASGRVYHTVYNPPKIAGKDDITGEDLVQRKDD) is LID. Residues R123 and 132–133 (VY) each bind ATP. Residues R156 and R167 each coordinate AMP. G201 provides a ligand contact to ATP.

It belongs to the adenylate kinase family. As to quaternary structure, monomer.

The protein resides in the cytoplasm. It catalyses the reaction AMP + ATP = 2 ADP. The protein operates within purine metabolism; AMP biosynthesis via salvage pathway; AMP from ADP: step 1/1. In terms of biological role, catalyzes the reversible transfer of the terminal phosphate group between ATP and AMP. Plays an important role in cellular energy homeostasis and in adenine nucleotide metabolism. This is Adenylate kinase from Pseudomonas fluorescens (strain ATCC BAA-477 / NRRL B-23932 / Pf-5).